The sequence spans 423 residues: Probable peptidoglycan glycosyltransferase FtsW (423 aa).

Topologically, residues 1 to 53 are cytoplasmic; it reads MNLKEKLFPENRLGLNRFWNFSRGGIDNFRTGLRDAVSGVEQTRSRMMEYDQL. The helical transmembrane segment at 54-74 threads the bilayer; sequence LVWAILSLMLIGLVMVYSASI. At 75 to 88 the chain is on the periplasmic side; that stretch reads TLADGPKYANYSSN. A helical membrane pass occupies residues 89–109; it reads FFLIRHMISLAIAIGVGIWAF. At 110–119 the chain is on the cytoplasmic side; that stretch reads KIPTKVWDRY. Residues 120 to 140 traverse the membrane as a helical segment; the sequence is SPVIFGITVLLLIAVLIPGVG. The Periplasmic portion of the chain corresponds to 141 to 149; sequence RGVNGAKRW. The chain crosses the membrane as a helical span at residues 150 to 170; that stretch reads IPLGLMNFQSSELMKFAAVIF. The Cytoplasmic segment spans residues 171-184; that stretch reads AASYTVQRQEYLHS. A helical membrane pass occupies residues 185 to 205; it reads FVKGMLPMGIAVALVGGLLMA. Over 206–208 the chain is Periplasmic; it reads EPD. The chain crosses the membrane as a helical span at residues 209-229; the sequence is MGAFVVVALIAFGILFLGGIN. The Cytoplasmic segment spans residues 230 to 231; that stretch reads AK. The chain crosses the membrane as a helical span at residues 232 to 252; that stretch reads LFGGLIAVGLMSGATMIAFSP. The Periplasmic portion of the chain corresponds to 253–310; that stretch reads LRRGRMLAFMDPWQVDNAANKGYQLTHSLMAFGRGEWFGTGLGGSVEKLHYLPEAHTD. Residues 311 to 331 traverse the membrane as a helical segment; the sequence is FIMAVIGEELGFVGVVVMIFL. The Cytoplasmic segment spans residues 332 to 359; it reads FYWIVRRAFLIGRTALQLDRSFAGLAAK. A helical membrane pass occupies residues 360-380; it reads GVAIWIGWQAFINMGVNLGLL. At 381–386 the chain is on the periplasmic side; sequence PTKGLT. A helical transmembrane segment spans residues 387–407; it reads LPLVSYGGSGILMNAVAMAML. Over 408-423 the chain is Cytoplasmic; sequence LRIDFENRILMRGGKL.

The protein belongs to the SEDS family. FtsW subfamily.

The protein localises to the cell inner membrane. The catalysed reaction is [GlcNAc-(1-&gt;4)-Mur2Ac(oyl-L-Ala-gamma-D-Glu-L-Lys-D-Ala-D-Ala)](n)-di-trans,octa-cis-undecaprenyl diphosphate + beta-D-GlcNAc-(1-&gt;4)-Mur2Ac(oyl-L-Ala-gamma-D-Glu-L-Lys-D-Ala-D-Ala)-di-trans,octa-cis-undecaprenyl diphosphate = [GlcNAc-(1-&gt;4)-Mur2Ac(oyl-L-Ala-gamma-D-Glu-L-Lys-D-Ala-D-Ala)](n+1)-di-trans,octa-cis-undecaprenyl diphosphate + di-trans,octa-cis-undecaprenyl diphosphate + H(+). It functions in the pathway cell wall biogenesis; peptidoglycan biosynthesis. Peptidoglycan polymerase that is essential for cell division. The polypeptide is Probable peptidoglycan glycosyltransferase FtsW (Polynucleobacter necessarius subsp. necessarius (strain STIR1)).